Consider the following 96-residue polypeptide: Large ribosomal subunit protein uL23 (96 aa).

The protein belongs to the universal ribosomal protein uL23 family. In terms of assembly, part of the 50S ribosomal subunit. Contacts protein L29, and trigger factor when it is bound to the ribosome.

In terms of biological role, one of the early assembly proteins it binds 23S rRNA. One of the proteins that surrounds the polypeptide exit tunnel on the outside of the ribosome. Forms the main docking site for trigger factor binding to the ribosome. The polypeptide is Large ribosomal subunit protein uL23 (Brevibacillus brevis (strain 47 / JCM 6285 / NBRC 100599)).